The primary structure comprises 60 residues: Large ribosomal subunit protein uL30 (60 aa).

The protein belongs to the universal ribosomal protein uL30 family. In terms of assembly, part of the 50S ribosomal subunit.

The sequence is that of Large ribosomal subunit protein uL30 from Limosilactobacillus reuteri (strain DSM 20016) (Lactobacillus reuteri).